Here is a 589-residue protein sequence, read N- to C-terminus: Oligo-1,6-glucosidase IMA2 (589 aa).

The Nucleophile role is filled by aspartate 215. Glutamate 277 acts as the Proton donor in catalysis.

This sequence belongs to the glycosyl hydrolase 13 family.

It catalyses the reaction Hydrolysis of (1-&gt;6)-alpha-D-glucosidic linkages in some oligosaccharides produced from starch and glycogen by alpha-amylase, and in isomaltose.. Its function is as follows. Alpha-glucosidase with specificity for isomaltase, methyl-alpha-glucoside, and palatinose. The chain is Oligo-1,6-glucosidase IMA2 (IMA2) from Saccharomyces cerevisiae (strain ATCC 204508 / S288c) (Baker's yeast).